The sequence spans 194 residues: Alkyl hydroperoxide reductase AhpD (194 aa).

The active-site Proton donor is the Cys132. Residues Cys132 and Cys135 are joined by a disulfide bond. Cys135 functions as the Cysteine sulfenic acid (-SOH) intermediate in the catalytic mechanism.

This sequence belongs to the AhpD family.

It catalyses the reaction N(6)-[(R)-dihydrolipoyl]-L-lysyl-[lipoyl-carrier protein] + a hydroperoxide = N(6)-[(R)-lipoyl]-L-lysyl-[lipoyl-carrier protein] + an alcohol + H2O. Antioxidant protein with alkyl hydroperoxidase activity. Required for the reduction of the AhpC active site cysteine residues and for the regeneration of the AhpC enzyme activity. The polypeptide is Alkyl hydroperoxide reductase AhpD (Koribacter versatilis (strain Ellin345)).